Here is a 428-residue protein sequence, read N- to C-terminus: Glutamyl-tRNA reductase (428 aa).

Residues 49–52, Ser109, 114–116, and Gln120 each bind substrate; these read TCNR and EGQ. Cys50 serves as the catalytic Nucleophile. 189–194 contacts NADP(+); it reads GAGKMS.

This sequence belongs to the glutamyl-tRNA reductase family. As to quaternary structure, homodimer.

It carries out the reaction (S)-4-amino-5-oxopentanoate + tRNA(Glu) + NADP(+) = L-glutamyl-tRNA(Glu) + NADPH + H(+). It functions in the pathway porphyrin-containing compound metabolism; protoporphyrin-IX biosynthesis; 5-aminolevulinate from L-glutamyl-tRNA(Glu): step 1/2. The protein operates within porphyrin-containing compound metabolism; chlorophyll biosynthesis. Catalyzes the NADPH-dependent reduction of glutamyl-tRNA(Glu) to glutamate 1-semialdehyde (GSA). This Gloeothece citriformis (strain PCC 7424) (Cyanothece sp. (strain PCC 7424)) protein is Glutamyl-tRNA reductase.